A 328-amino-acid chain; its full sequence is Biotin synthase (328 aa).

The Radical SAM core domain occupies 49-273; that stretch reads FNKEKIETCS…ICISRIIMPE (225 aa). [4Fe-4S] cluster-binding residues include Cys-67, Cys-71, and Cys-74. 4 residues coordinate [2Fe-2S] cluster: Ser-110, Cys-142, Cys-201, and Arg-277.

This sequence belongs to the radical SAM superfamily. Biotin synthase family. As to quaternary structure, homodimer. The cofactor is [4Fe-4S] cluster. It depends on [2Fe-2S] cluster as a cofactor.

It carries out the reaction (4R,5S)-dethiobiotin + (sulfur carrier)-SH + 2 reduced [2Fe-2S]-[ferredoxin] + 2 S-adenosyl-L-methionine = (sulfur carrier)-H + biotin + 2 5'-deoxyadenosine + 2 L-methionine + 2 oxidized [2Fe-2S]-[ferredoxin]. It functions in the pathway cofactor biosynthesis; biotin biosynthesis; biotin from 7,8-diaminononanoate: step 2/2. Its function is as follows. Catalyzes the conversion of dethiobiotin (DTB) to biotin by the insertion of a sulfur atom into dethiobiotin via a radical-based mechanism. The polypeptide is Biotin synthase (Methanococcus vannielii (strain ATCC 35089 / DSM 1224 / JCM 13029 / OCM 148 / SB)).